A 94-amino-acid chain; its full sequence is DNA-directed RNA polymerase subunit omega (94 aa).

Belongs to the RNA polymerase subunit omega family. The RNAP catalytic core consists of 2 alpha, 1 beta, 1 beta' and 1 omega subunit. When a sigma factor is associated with the core the holoenzyme is formed, which can initiate transcription.

It carries out the reaction RNA(n) + a ribonucleoside 5'-triphosphate = RNA(n+1) + diphosphate. In terms of biological role, promotes RNA polymerase assembly. Latches the N- and C-terminal regions of the beta' subunit thereby facilitating its interaction with the beta and alpha subunits. The polypeptide is DNA-directed RNA polymerase subunit omega (Frankia alni (strain DSM 45986 / CECT 9034 / ACN14a)).